The following is a 201-amino-acid chain: Ras-related protein Rab-1B (201 aa).

An N-acetylmethionine modification is found at Met1. Residues Ser17, Gly18, Val19, Gly20, Lys21, Ser22, Cys23, Tyr33, Thr34, Glu35, Ser36, Ser39, and Thr40 each contribute to the GTP site. A Mg(2+)-binding site is contributed by Ser22. A Switch 1 motif is present at residues 30 to 45 (DDTYTESYISTIGVDF). Mg(2+)-binding residues include Thr40 and Asp63. The segment at 64–83 (TAGQERFRTVTSSYYRGAHG) is switch 2 region; required for interaction with REP1/CHM. Positions 65-80 (AGQERFRTVTSSYYRG) match the Switch 2 motif. Residues Gly66, Asn121, Lys122, Asp124, Ser151, Ala152, and Lys153 each coordinate GTP. Residues 173–201 (MGPGAASGGERPNLKIDSTPVKSASGGCC) form a disordered region. Residues Cys200 and Cys201 are each lipidated (S-geranylgeranyl cysteine). Cys201 is modified (cysteine methyl ester).

It belongs to the small GTPase superfamily. Rab family. As to quaternary structure, interacts with MICAL1 and MICAL2. Interacts (in GTP-bound form) with MICALCL, MICAL1 and MILCAL3. Interacts with GDI1; the interaction requires the GDP-bound state. Interacts with CHM/REP1; the interaction requires the GDP-bound form and is necessary for prenylation by GGTase II. Interacts with RabGAP TBC1D20. Interacts (in GDP-bound form) with lipid phosphatase MTMR6 (via GRAM domain); the interaction regulates MTMR6 recruitment to the endoplasmic reticulum-Golgi intermediate compartment. Interacts (in GDP-bound form) with lipid phosphatase MTMR7. Mg(2+) serves as cofactor. Post-translationally, prenylated; by GGTase II, only after interaction of the substrate with Rab escort protein 1 (REP1).

The protein resides in the cytoplasm. Its subcellular location is the membrane. It localises to the preautophagosomal structure membrane. It is found in the perinuclear region. It carries out the reaction GTP + H2O = GDP + phosphate + H(+). With respect to regulation, regulated by guanine nucleotide exchange factors (GEFs) which promote the exchange of bound GDP for free GTP. Regulated by GTPase activating proteins (GAPs) including TBC1D20 which increases the GTP hydrolysis activity. Inhibited by GDP dissociation inhibitors (GDIs). Functionally, the small GTPases Rab are key regulators of intracellular membrane trafficking, from the formation of transport vesicles to their fusion with membranes. Rabs cycle between an inactive GDP-bound form and an active GTP-bound form that is able to recruit to membranes different set of downstream effectors directly responsible for vesicle formation, movement, tethering and fusion. Plays a role in the initial events of the autophagic vacuole development which take place at specialized regions of the endoplasmic reticulum. Regulates vesicular transport between the endoplasmic reticulum and successive Golgi compartments. Required to modulate the compacted morphology of the Golgi. Promotes the recruitment of lipid phosphatase MTMR6 to the endoplasmic reticulum-Golgi intermediate compartment. In Rattus norvegicus (Rat), this protein is Ras-related protein Rab-1B (Rab1b).